A 649-amino-acid chain; its full sequence is Putative calpain-like cysteine protease A (649 aa).

Residues 1 to 3 constitute a propeptide that is removed on maturation; the sequence is MLT. Disordered stretches follow at residues 1 to 22 and 124 to 193; these read MLTTESPTTTTTTTTTTTSSPS and PLSN…SMPA. The 109-residue stretch at 15–123 folds into the C2 domain; sequence TTTTSSPSSD…LHANGEAKWY (109 aa). Residues 140–149 are compositionally biased toward low complexity; it reads ITNSNNKDNN. Residues 159-172 show a composition bias toward basic and acidic residues; the sequence is AQEKGDEDQHHSAD. 2 domain III regions span residues 458–489 and 498–633; these read EGTYIVIPSTYDHGIEGAFHLTLFTDDKNATF and EVEQ…ISLD.

This sequence belongs to the peptidase C2 family. As to quaternary structure, monomer. Post-translationally, undergoes autolytic cleavage between Pro-192 and Ala-193.

It localises to the cytoplasm. The protein resides in the cytosol. Has a weak caseinolytic activity. The sequence is that of Putative calpain-like cysteine protease A (cplA) from Dictyostelium discoideum (Social amoeba).